A 288-amino-acid chain; its full sequence is Probable HTH-type transcriptional regulator STM3175 (288 aa).

Positions 14 to 113 (RRVCDHIERH…GQSPRRFRQS (100 aa)) constitute an HTH araC/xylS-type domain. 2 DNA-binding regions (H-T-H motif) span residues 31 to 52 (EALS…TTWS) and 80 to 103 (VIDI…KTAF). A putative effector binding domain; binds the peptide antibiotic albicidin region spans residues 111–288 (RQSPDWLAWH…LLTDIYLPLR (178 aa)).

Homodimer.

Probable transcription factor. The polypeptide is Probable HTH-type transcriptional regulator STM3175 (Salmonella typhimurium (strain LT2 / SGSC1412 / ATCC 700720)).